Here is an 816-residue protein sequence, read N- to C-terminus: Pentatricopeptide repeat-containing protein At5g12100, mitochondrial (816 aa).

The N-terminal 39 residues, 1 to 39 (MVTRLRLVSRSSRYATVKFTDSVSACSCRRLFSASTDPE), are a transit peptide targeting the mitochondrion. The interval 34-57 (ASTDPEPESQPEQAPPTNPVTGDE) is disordered. PPR repeat units lie at residues 108–142 (HDFS…GIYP), 143–177 (SSDS…DFRP), 178–212 (SKFM…RIYP), 213–247 (SVFI…RLLP), 248–282 (SLIT…HIEP), 283–317 (SLIT…GFVP), 318–352 (DAFT…GVKM), 353–387 (NAYT…GLVP), 388–422 (NEVI…GMKP), 423–457 (DHLA…GVSP), 458–492 (SVET…GTMP), 493–527 (NVVS…GVSP), 528–562 (KVRI…GIEL), 563–597 (NLVT…GLKP), 598–632 (DVFT…GIKP), 633–662 (TLKT…MSLK), 664–698 (DLLV…SIGL), 699–733 (DKTT…EMEP), 734–768 (EADT…GFLL), and 769–803 (DVCI…MLGD).

It belongs to the PPR family. P subfamily.

The protein resides in the mitochondrion. The chain is Pentatricopeptide repeat-containing protein At5g12100, mitochondrial from Arabidopsis thaliana (Mouse-ear cress).